A 68-amino-acid polypeptide reads, in one-letter code: Large ribosomal subunit protein uL29 (68 aa).

This sequence belongs to the universal ribosomal protein uL29 family.

The sequence is that of Large ribosomal subunit protein uL29 from Streptococcus uberis (strain ATCC BAA-854 / 0140J).